Reading from the N-terminus, the 604-residue chain is Elongation factor 4 (604 aa).

The tr-type G domain occupies 4–186 (EFIRNFSIIA…AIVHLVPPPK (183 aa)). Residues 16-21 (DHGKST) and 133-136 (NKID) each bind GTP.

The protein belongs to the TRAFAC class translation factor GTPase superfamily. Classic translation factor GTPase family. LepA subfamily.

The protein localises to the cell inner membrane. The enzyme catalyses GTP + H2O = GDP + phosphate + H(+). Functionally, required for accurate and efficient protein synthesis under certain stress conditions. May act as a fidelity factor of the translation reaction, by catalyzing a one-codon backward translocation of tRNAs on improperly translocated ribosomes. Back-translocation proceeds from a post-translocation (POST) complex to a pre-translocation (PRE) complex, thus giving elongation factor G a second chance to translocate the tRNAs correctly. Binds to ribosomes in a GTP-dependent manner. This Solibacter usitatus (strain Ellin6076) protein is Elongation factor 4.